The primary structure comprises 353 residues: Guanine nucleotide-binding protein G(q) subunit alpha (353 aa).

Residues cysteine 3 and cysteine 4 are each lipidated (S-palmitoyl cysteine). The G-alpha domain occupies 32–353 (RELKLLLLGT…QLNLKEYNLV (322 aa)). The interval 35 to 48 (KLLLLGTGESGKST) is G1 motif. GTP-binding positions include 40 to 47 (GTGESGKS), 174 to 180 (LRVRVPT), 199 to 203 (DVGGQ), 268 to 271 (NKKD), and alanine 325. Serine 47 and threonine 180 together coordinate Mg(2+). The segment at 172 to 180 (DILRVRVPT) is G2 motif. Residues 195-204 (FRMVDVGGQR) form a G3 motif region. The segment at 264–271 (ILFLNKKD) is G4 motif. A G5 motif region spans residues 323 to 328 (TCATDT).

Belongs to the G-alpha family. G(q) subfamily. In terms of assembly, g proteins are composed of 3 units; alpha, beta and gamma. The alpha chain contains the guanine nucleotide binding site.

In terms of biological role, guanine nucleotide-binding proteins (G proteins) are involved as modulators or transducers in various transmembrane signaling systems. In Lymnaea stagnalis (Great pond snail), this protein is Guanine nucleotide-binding protein G(q) subunit alpha.